We begin with the raw amino-acid sequence, 327 residues long: Spermidine/putrescine import ATP-binding protein PotA (327 aa).

Residues 5-235 (IKVEAVEKHF…PKTLFVATFI (231 aa)) form the ABC transporter domain. An ATP-binding site is contributed by 37–44 (GPSGCGKT).

This sequence belongs to the ABC transporter superfamily. Spermidine/putrescine importer (TC 3.A.1.11.1) family. As to quaternary structure, the complex is composed of two ATP-binding proteins (PotA), two transmembrane proteins (PotB and PotC) and a solute-binding protein (PotD).

Its subcellular location is the cell membrane. It catalyses the reaction ATP + H2O + polyamine-[polyamine-binding protein]Side 1 = ADP + phosphate + polyamineSide 2 + [polyamine-binding protein]Side 1.. Functionally, part of the ABC transporter complex PotABCD involved in spermidine/putrescine import. Responsible for energy coupling to the transport system. The protein is Spermidine/putrescine import ATP-binding protein PotA of Bacillus cereus (strain ATCC 14579 / DSM 31 / CCUG 7414 / JCM 2152 / NBRC 15305 / NCIMB 9373 / NCTC 2599 / NRRL B-3711).